Reading from the N-terminus, the 57-residue chain is Large ribosomal subunit protein bL32c (57 aa).

This sequence belongs to the bacterial ribosomal protein bL32 family.

The protein localises to the plastid. It localises to the chloroplast. This is Large ribosomal subunit protein bL32c from Liriodendron tulipifera (Tuliptree).